A 158-amino-acid polypeptide reads, in one-letter code: Transcription elongation factor GreA (158 aa).

Residues 41–61 (GDLSENAEYHAAKEDQSHNEG) form a disordered region. Residues 51–74 (AAKEDQSHNEGRIAELEDKLARAE) are a coiled coil.

It belongs to the GreA/GreB family.

Necessary for efficient RNA polymerase transcription elongation past template-encoded arresting sites. The arresting sites in DNA have the property of trapping a certain fraction of elongating RNA polymerases that pass through, resulting in locked ternary complexes. Cleavage of the nascent transcript by cleavage factors such as GreA or GreB allows the resumption of elongation from the new 3'terminus. GreA releases sequences of 2 to 3 nucleotides. The protein is Transcription elongation factor GreA of Nitrobacter hamburgensis (strain DSM 10229 / NCIMB 13809 / X14).